The primary structure comprises 314 residues: Cyclin-dependent kinase 2 (314 aa).

The Protein kinase domain maps to 8–287 (FQRAEKIGEG…AKDALQHAYF (280 aa)). ATP is bound by residues 14–22 (IGEGTYGIV) and lysine 37. Threonine 18 is modified (phosphothreonine). At tyrosine 19 the chain carries Phosphotyrosine. The Proton acceptor role is filled by aspartate 130. The residue at position 162 (tyrosine 162) is a Phosphotyrosine. Threonine 163 carries the post-translational modification Phosphothreonine.

This sequence belongs to the protein kinase superfamily. CMGC Ser/Thr protein kinase family. CDC2/CDKX subfamily. Interacts with cyclin CycG.

It carries out the reaction L-seryl-[protein] + ATP = O-phospho-L-seryl-[protein] + ADP + H(+). It catalyses the reaction L-threonyl-[protein] + ATP = O-phospho-L-threonyl-[protein] + ADP + H(+). The enzyme catalyses [DNA-directed RNA polymerase] + ATP = phospho-[DNA-directed RNA polymerase] + ADP + H(+). Functionally, like Cdk1, could play a key role in the control of the eukaryotic cell cycle. The polypeptide is Cyclin-dependent kinase 2 (Drosophila melanogaster (Fruit fly)).